The following is a 375-amino-acid chain: Carboxypeptidase O (375 aa).

Positions 1-20 are cleaved as a signal peptide; it reads MKPLLGTFYLLGMLVPGWLG. The Peptidase M14 domain maps to 50–345; it reads RYHPMGEIYQ…EAVLSVLDDV (296 aa). Zn(2+) contacts are provided by His109 and Glu112. Residue Asn175 is glycosylated (N-linked (GlcNAc...) asparagine). His237 contributes to the Zn(2+) binding site. An N-linked (GlcNAc...) asparagine glycan is attached at Asn252. Glu311 functions as the Proton donor/acceptor in the catalytic mechanism. Residue Asn315 is glycosylated (N-linked (GlcNAc...) asparagine). Residue Ser354 is the site of GPI-anchor amidated serine attachment. Residues 355–375 constitute a propeptide, removed in mature form; sequence ARKAKSTALVLGLLMSFMSLL.

It belongs to the peptidase M14 family. It depends on Zn(2+) as a cofactor.

It localises to the apical cell membrane. Its function is as follows. Carboxypeptidase which preferentially cleaves C-terminal acidic residues from peptides and proteins. Can also cleave C-terminal hydrophobic amino acids, with a preference for small residues over large residues. The chain is Carboxypeptidase O from Bos taurus (Bovine).